The primary structure comprises 328 residues: Telomere-binding protein cav (328 aa).

Residues 107 to 320 form a required for binding to Su(var)205 region; it reads RRKMVQPYPE…NISLQNSGSE (214 aa). Residues 139–228 form a disordered region; the sequence is DRWQKQKSQN…EFQTEHTDCP (90 aa). 2 stretches are compositionally biased toward polar residues: residues 144–167 and 180–189; these read QKSQ…QQDS and ANTNRYSVSQ. Short sequence motifs (su(var)205-binding Pro-containing repeat) lie at residues 228–232 and 281–287; these read PETQM and PETETNE. The segment covering 295–319 has biased composition (polar residues); sequence INSESMSIGPSIDSEGNISLQNSGS. Positions 295 to 328 are disordered; it reads INSESMSIGPSIDSEGNISLQNSGSEPIDVDSMA.

As to quaternary structure, interacts (via C-terminus) with Su(var)205 dimer (via hinge and chromoshadow domain) and with moi to form the terminin, telomere-capping, complex. Interacts with HP6, which is also part of the terminin complex.

It is found in the nucleus. The protein resides in the chromosome. The protein localises to the telomere. Its function is as follows. Binds to chromosome ends in a sequence-dependent manner and is required for telomere capping. This is Telomere-binding protein cav from Drosophila erecta (Fruit fly).